Reading from the N-terminus, the 171-residue chain is GTP-dependent dephospho-CoA kinase (171 aa).

Positions 49, 51, 68, and 122 each coordinate GTP.

It belongs to the GTP-dependent DPCK family.

It catalyses the reaction 3'-dephospho-CoA + GTP = GDP + CoA + H(+). It functions in the pathway cofactor biosynthesis; coenzyme A biosynthesis. Its function is as follows. Catalyzes the GTP-dependent phosphorylation of the 3'-hydroxyl group of dephosphocoenzyme A to form coenzyme A (CoA). The protein is GTP-dependent dephospho-CoA kinase of Hyperthermus butylicus (strain DSM 5456 / JCM 9403 / PLM1-5).